A 684-amino-acid polypeptide reads, in one-letter code: MSAKDFLVELGTEELPPKALNSLGEAFLSGIEKGLKAAGLSYAAARFYAAPRRLAVLVEQLAVQQPDRTVNLDGPPLQAAFDASGNPTQAALGFAKKCGVDLQQIDKSGPKLRFSQTIAGQPAAGLLPGIVEASLNELPIPKRMRWAARREEFVRPTQWLVMLFGDDVVECEILAQKAGRESRGHRFHNPDNVRISSPAAYLEDLRGAHVLADFAERRELIAKRVAELAAEQQGSAIVPPSLLDEVTALVEWPVPLVCSFEERFLEVPQEALITTMQDNQKYFCLLDANGKLLPRFITVANVESKAPENIVSGNEKVVRPRLTDAEFFFKQDKKQPLESFNERLRNVVFQAQLGTVFEKAQRVSGLAAYIAERIGGNAQNASRAGILSKCDLATEMVGEFPEMQGIAGYYYATHGGEAEDVALALNEQYMPRGAGAELPSTLTGAAVAVADKLDTLVGIFGIGMLPTGSKDPYALRRAALGVLRILIEKQLDLDLVAAVNAAVEQYGDKVKAAGLAEQVLDFVFDRLRARYEDEGVDVAVYQSVRALKPSSPLDFDQRVQAVQAFRQLPEAEALAAANKRVSNILAKSEDEVPPNVDASLLVEAAEKALGSAVANAESEVAPLAAARDYRAALARLAALREPVDTFFADVMVNVDDAAVRANRYALLAKLRGSFLGVADISLLG.

This sequence belongs to the class-II aminoacyl-tRNA synthetase family. In terms of assembly, tetramer of two alpha and two beta subunits.

It is found in the cytoplasm. It catalyses the reaction tRNA(Gly) + glycine + ATP = glycyl-tRNA(Gly) + AMP + diphosphate. The protein is Glycine--tRNA ligase beta subunit of Pseudomonas aeruginosa (strain LESB58).